A 192-amino-acid chain; its full sequence is Signal peptidase complex subunit 2 (192 aa).

Residues 1 to 46 (MEEKKTESTNKNVKKANLLDHHSIKHILDESVSDIVTSRGYKEDVR) lie on the Cytoplasmic side of the membrane. The chain crosses the membrane as a helical span at residues 47–69 (LSNLKLILGTIIIVVALVAQFYN). Topologically, residues 70–78 (KKFPENRDF) are lumenal. A helical membrane pass occupies residues 79 to 98 (LIGCIALYVVLNAVLQLILY). Over 99–192 (TKEKNAILFT…YAEEEPKKKK (94 aa)) the chain is Cytoplasmic.

Belongs to the SPCS2 family. In terms of assembly, component of the signal peptidase complex (SPC) composed of a catalytic subunit SEC11 and three accessory subunits SPCS1, SPCS2 and SPCS3. The complex induces a local thinning of the ER membrane which is used to measure the length of the signal peptide (SP) h-region of protein substrates. This ensures the selectivity of the complex towards h-regions shorter than 18-20 amino acids.

It is found in the endoplasmic reticulum membrane. Component of the signal peptidase complex (SPC) which catalyzes the cleavage of N-terminal signal sequences from nascent proteins as they are translocated into the lumen of the endoplasmic reticulum. Enhances the enzymatic activity of SPC and facilitates the interactions between different components of the translocation site. The polypeptide is Signal peptidase complex subunit 2 (Arabidopsis thaliana (Mouse-ear cress)).